The following is a 127-amino-acid chain: MKLLTSLFLLSLVLCVNSQGWLRDSLDFLNQARLGAGDMWRAYRDMREANFKNSDKYFHARGNYDAAKRGPGGVWAAEVLSDAREFLQGGSSGRGVEDSMADQEANRWGRSGKDPNRYRPKGLDPKY.

The signal sequence occupies residues 1–18 (MKLLTSLFLLSLVLCVNS). Q19 carries the pyrrolidone carboxylic acid modification. Positions 89 to 127 (GGSSGRGVEDSMADQEANRWGRSGKDPNRYRPKGLDPKY) are disordered. The segment covering 104 to 127 (EANRWGRSGKDPNRYRPKGLDPKY) has biased composition (basic and acidic residues).

The protein belongs to the SAA family. Expressed by the liver; secreted in plasma.

The protein resides in the secreted. Major acute phase reactant. Apolipoprotein of the HDL complex. This Notamacropus eugenii (Tammar wallaby) protein is Serum amyloid A protein (SAA1).